A 133-amino-acid polypeptide reads, in one-letter code: Snaclec purpureotin subunit alpha (133 aa).

Intrachain disulfides connect Cys-2–Cys-13, Cys-30–Cys-127, and Cys-102–Cys-119. The 120-residue stretch at 9-128 folds into the C-type lectin domain; that stretch reads FKQYCYQIIK…CEQKHIFMCK (120 aa).

The protein belongs to the snaclec family. As to quaternary structure, homodimer (non-covalently linked) of heterodimer of alpha and beta subunits (disulfide-linked). In terms of tissue distribution, expressed by the venom gland.

It localises to the secreted. In terms of biological role, snaclec that induces platelet aggregation without any cofactor in a dose-dependent manner. Its platelet aggregation effect is blocked by echicetin, suggesting it is a GPIb-binding protein which binds to the same or a closely related GPIb site on platelets as echicetin. The sequence is that of Snaclec purpureotin subunit alpha from Trimeresurus purpureomaculatus (Mangrove pit viper).